A 152-amino-acid chain; its full sequence is Small ribosomal subunit protein uS5 (152 aa).

The S5 DRBM domain occupies 14 to 77 (FEEVIVNIGR…DDAHKNLVKV (64 aa)).

Belongs to the universal ribosomal protein uS5 family. Part of the 30S ribosomal subunit. Contacts proteins S4 and S8.

Its function is as follows. With S4 and S12 plays an important role in translational accuracy. Located at the back of the 30S subunit body where it stabilizes the conformation of the head with respect to the body. In Sulfurovum sp. (strain NBC37-1), this protein is Small ribosomal subunit protein uS5.